A 116-amino-acid chain; its full sequence is U16-barytoxin-Tl1f (116 aa).

Residues 1–20 (MKTIIVFLSLLVLATKFGDA) form the signal peptide. Positions 21–74 (NEGVNQEQMKEVIQNEFREDFLNEMAAMSLLQQLEAIESTLLEKEADRNSRQKR) are excised as a propeptide. 3 disulfide bridges follow: Cys75–Cys90, Cys82–Cys95, and Cys89–Cys110. Residue Asn85 is glycosylated (N-linked (GlcNAc...) asparagine).

It belongs to the neurotoxin 14 (magi-1) family. 06 (ICK-Trit) subfamily. In terms of tissue distribution, expressed by the venom gland.

It localises to the secreted. Ion channel inhibitor. In Trittame loki (Brush-footed trapdoor spider), this protein is U16-barytoxin-Tl1f.